A 956-amino-acid polypeptide reads, in one-letter code: Outer capsid protein VP2 (956 aa).

Belongs to the orbivirus VP2 family.

It is found in the virion. The VP2 protein is one of the two proteins (with VP5) which constitute the virus particle outer capsid. It is the major target of the host immunogenic response. Responsible for viral attachment to target host cell, probably by binding to sialic acid. This attachment induces virion internalization predominantly through clathrin-dependent endocytosis. This chain is Outer capsid protein VP2 (Segment-2), found in Bluetongue virus 11 (isolate USA) (BTV 11).